A 568-amino-acid polypeptide reads, in one-letter code: Type 3 secretion system secretin (568 aa).

A signal peptide spans 1 to 15; that stretch reads MAAALLLWTAGTVCA. The interval 203–292 is disordered; that stretch reads YGGDGPSDSG…RGSTPIIRAD (90 aa). Residues 243-257 show a composition bias toward gly residues; that stretch reads LGGGKSPLPPGGTGQ. Basic and acidic residues predominate over residues 273–284; that stretch reads NRLRSDELDDRG.

This sequence belongs to the bacterial secretin family. T3SS SctC subfamily. The core secretion machinery of the T3SS is composed of approximately 20 different proteins, including cytoplasmic components, a base, an export apparatus and a needle. This subunit is part of the base, which anchors the injectisome in the bacterial cell envelope. Forms a stable homooligomeric complex.

Its subcellular location is the cell outer membrane. Its function is as follows. Component of the type III secretion system (T3SS), also called injectisome, which is used to inject bacterial effector proteins into eukaryotic host cells. Forms a ring-shaped multimeric structure with an apparent central pore in the outer membrane. The protein is Type 3 secretion system secretin of Ralstonia nicotianae (strain ATCC BAA-1114 / GMI1000) (Ralstonia solanacearum).